Reading from the N-terminus, the 203-residue chain is Glycerol-3-phosphate acyltransferase 1 (203 aa).

Transmembrane regions (helical) follow at residues 2 to 22 (LNFFLITIQFLSGAVMYSHII), 52 to 72 (GFPALMLDYFKGTFPIAFFVW), 82 to 102 (VIAFAALSGILGHAFSPFLKF), 117 to 137 (VLTKWEGPMVLGTVFTIFSIL), 150 to 168 (EDAFRVMIGFAALLIYTMW), and 170 to 190 (VFNGMPELAILYFGNFLIVFY).

Belongs to the PlsY family. As to quaternary structure, probably interacts with PlsX.

Its subcellular location is the cell inner membrane. It catalyses the reaction an acyl phosphate + sn-glycerol 3-phosphate = a 1-acyl-sn-glycero-3-phosphate + phosphate. Its pathway is lipid metabolism; phospholipid metabolism. Functionally, catalyzes the transfer of an acyl group from acyl-phosphate (acyl-PO(4)) to glycerol-3-phosphate (G3P) to form lysophosphatidic acid (LPA). This enzyme utilizes acyl-phosphate as fatty acyl donor, but not acyl-CoA or acyl-ACP. In Thermotoga maritima (strain ATCC 43589 / DSM 3109 / JCM 10099 / NBRC 100826 / MSB8), this protein is Glycerol-3-phosphate acyltransferase 1.